We begin with the raw amino-acid sequence, 125 residues long: Fluoride-specific ion channel FluC (125 aa).

The next 4 membrane-spanning stretches (helical) occupy residues 4–24 (ILLVGAGGALGSVLRYLVGLW), 32–52 (AFPWGTLFVNVTGSFLIGFLA), 68–88 (FLITGVLGGYTTFSAFSLDAI), and 100–120 (LAYIVASVGLSMLAVFAGLAL). Residues Gly75 and Thr78 each coordinate Na(+).

Belongs to the fluoride channel Fluc/FEX (TC 1.A.43) family.

Its subcellular location is the cell inner membrane. The catalysed reaction is fluoride(in) = fluoride(out). With respect to regulation, na(+) is not transported, but it plays an essential structural role and its presence is essential for fluoride channel function. Its function is as follows. Fluoride-specific ion channel. Important for reducing fluoride concentration in the cell, thus reducing its toxicity. This chain is Fluoride-specific ion channel FluC, found in Rhizobium meliloti (strain 1021) (Ensifer meliloti).